The primary structure comprises 138 residues: Acidic phospholipase A2 BE-I-PLA2 (138 aa).

Positions 1-16 are cleaved as a signal peptide; sequence MRTLWIMAVLLVGVEG. 7 cysteine pairs are disulfide-bonded: C42–C131, C44–C60, C59–C111, C65–C138, C66–C104, C73–C97, and C91–C102. Residues Y43, G45, and G47 each coordinate Ca(2+). H63 is a catalytic residue. D64 provides a ligand contact to Ca(2+). Residue D105 is part of the active site.

This sequence belongs to the phospholipase A2 family. Group II subfamily. D49 sub-subfamily. It depends on Ca(2+) as a cofactor. As to expression, expressed by the venom gland.

The protein localises to the secreted. It carries out the reaction a 1,2-diacyl-sn-glycero-3-phosphocholine + H2O = a 1-acyl-sn-glycero-3-phosphocholine + a fatty acid + H(+). Snake venom phospholipase A2 that shows a potent inhibition of human platelet aggregation. This inhibition is concentration-dependent when aggregation is induced by collagen, and concentration-independent when aggregation is induced by arachidonic acid. In human umbilical-cord vein endothelial cells, this toxin stimulates endothelial cells to release prostaglandin I(2), suggesting an increase of its potential anti-platelet activity in vivo. PLA2 catalyzes the calcium-dependent hydrolysis of the 2-acyl groups in 3-sn-phosphoglycerides. This Bothrops erythromelas (Caatinga lance head) protein is Acidic phospholipase A2 BE-I-PLA2.